Consider the following 260-residue polypeptide: Phosphate import ATP-binding protein PstB (260 aa).

Residues 14–255 enclose the ABC transporter domain; that stretch reads VQVKNLAFYY…PRNKQTEDYI (242 aa). 46–53 is a binding site for ATP; sequence GPSGCGKS.

This sequence belongs to the ABC transporter superfamily. Phosphate importer (TC 3.A.1.7) family. In terms of assembly, the complex is composed of two ATP-binding proteins (PstB), two transmembrane proteins (PstC and PstA) and a solute-binding protein (PstS).

Its subcellular location is the cell inner membrane. The enzyme catalyses phosphate(out) + ATP + H2O = ADP + 2 phosphate(in) + H(+). Its function is as follows. Part of the ABC transporter complex PstSACB involved in phosphate import. Responsible for energy coupling to the transport system. The protein is Phosphate import ATP-binding protein PstB of Syntrophotalea carbinolica (strain DSM 2380 / NBRC 103641 / GraBd1) (Pelobacter carbinolicus).